Consider the following 160-residue polypeptide: Putative pre-16S rRNA nuclease (160 aa).

The protein belongs to the YqgF nuclease family.

The protein localises to the cytoplasm. Its function is as follows. Could be a nuclease involved in processing of the 5'-end of pre-16S rRNA. This chain is Putative pre-16S rRNA nuclease, found in Rhodopseudomonas palustris (strain HaA2).